The chain runs to 115 residues: Nucleoid-associated protein Npun_F0448 (115 aa).

Belongs to the YbaB/EbfC family. In terms of assembly, homodimer.

It is found in the cytoplasm. Its subcellular location is the nucleoid. In terms of biological role, binds to DNA and alters its conformation. May be involved in regulation of gene expression, nucleoid organization and DNA protection. The sequence is that of Nucleoid-associated protein Npun_F0448 from Nostoc punctiforme (strain ATCC 29133 / PCC 73102).